The primary structure comprises 475 residues: Ribulose bisphosphate carboxylase large chain (475 aa).

A propeptide spanning residues 1 to 2 (MS) is cleaved from the precursor. P3 carries the post-translational modification N-acetylproline. The residue at position 14 (K14) is an N6,N6,N6-trimethyllysine. N123 and T173 together coordinate substrate. Residue K175 is the Proton acceptor of the active site. K177 provides a ligand contact to substrate. Mg(2+) contacts are provided by K201, D203, and E204. Residue K201 is modified to N6-carboxylysine. The active-site Proton acceptor is H294. Residues R295, H327, and S379 each contribute to the substrate site.

This sequence belongs to the RuBisCO large chain family. Type I subfamily. As to quaternary structure, heterohexadecamer of 8 large chains and 8 small chains; disulfide-linked. The disulfide link is formed within the large subunit homodimers. Requires Mg(2+) as cofactor. In terms of processing, the disulfide bond which can form in the large chain dimeric partners within the hexadecamer appears to be associated with oxidative stress and protein turnover.

It localises to the plastid. It is found in the chloroplast. It carries out the reaction 2 (2R)-3-phosphoglycerate + 2 H(+) = D-ribulose 1,5-bisphosphate + CO2 + H2O. The enzyme catalyses D-ribulose 1,5-bisphosphate + O2 = 2-phosphoglycolate + (2R)-3-phosphoglycerate + 2 H(+). Functionally, ruBisCO catalyzes two reactions: the carboxylation of D-ribulose 1,5-bisphosphate, the primary event in carbon dioxide fixation, as well as the oxidative fragmentation of the pentose substrate in the photorespiration process. Both reactions occur simultaneously and in competition at the same active site. The chain is Ribulose bisphosphate carboxylase large chain from Vitis vinifera (Grape).